A 102-amino-acid chain; its full sequence is UPF0122 protein MPN_424 (102 aa).

Belongs to the UPF0122 family.

Might take part in the signal recognition particle (SRP) pathway. This is inferred from the conservation of its genetic proximity to ftsY/ffh. May be a regulatory protein. The chain is UPF0122 protein MPN_424 from Mycoplasma pneumoniae (strain ATCC 29342 / M129 / Subtype 1) (Mycoplasmoides pneumoniae).